The sequence spans 689 residues: Protein-glutamine gamma-glutamyltransferase 2 (689 aa).

Residues C278, H336, and D359 contribute to the active site. The Ca(2+) site is built by N399, D401, E437, E447, and E452. The tract at residues 427–453 is disordered; sequence STKSVGRDSREDITHTYKYPEGSEKER. The span at 431 to 441 shows a compositional bias: basic and acidic residues; that stretch reads VGRDSREDITH. A GTP-binding site is contributed by 476–483; sequence RIKLSEGA. E539 serves as a coordination point for Ca(2+). Position 580-583 (580-583) interacts with GTP; it reads RDVY.

This sequence belongs to the transglutaminase superfamily. Transglutaminase family. As to quaternary structure, monomer. Ca(2+) serves as cofactor. In terms of tissue distribution, predominates in mature erythrocytes. Also found in kidney and cardiac muscle.

The protein localises to the cytoplasm. It is found in the cytosol. It localises to the nucleus. The protein resides in the chromosome. Its subcellular location is the secreted. The protein localises to the extracellular space. It is found in the extracellular matrix. It localises to the cell membrane. The protein resides in the mitochondrion. The enzyme catalyses L-glutaminyl-[protein] + L-lysyl-[protein] = [protein]-L-lysyl-N(6)-5-L-glutamyl-[protein] + NH4(+). It carries out the reaction L-glutaminyl-[protein] + serotonin = 5-serotonyl-L-glutamyl-[protein] + NH4(+). It catalyses the reaction L-glutaminyl-[protein] + dopamine = 5-dopaminyl-L-glutamyl-[protein] + NH4(+). The catalysed reaction is L-glutaminyl-[protein] + histamine = 5-histaminyl-L-glutamyl-[protein] + NH4(+). The enzyme catalyses L-glutaminyl-[protein] + (R)-noradrenaline = 5-(R)-noradrenalinyl-L-glutamyl-[protein] + NH4(+). It carries out the reaction L-glutaminyl-[protein] + H2O = L-glutamyl-[protein] + NH4(+). With respect to regulation, acyltransferase activity is regulated by the binding of GTP and Ca(2+): inactivated by GTP, which stabilizes its closed structure, thereby obstructing the accessibility of substrates to the active sites. In contrast, Ca(2+) acts as a cofactor by inducing conformational change to the active open form. In absence of Ca(2+), Mg(2+) may bind Ca(2+)-binding sites, promoting GTP-binding and subsequent inhibition of the acyltransferase activity. Functionally, calcium-dependent acyltransferase that catalyzes the formation of covalent bonds between peptide-bound glutamine and various primary amines, such as gamma-amino group of peptide-bound lysine, or mono- and polyamines, thereby producing cross-linked or aminated proteins, respectively. Involved in many biological processes, such as bone development, angiogenesis, wound healing, cellular differentiation, chromatin modification and apoptosis. Acts as a protein-glutamine gamma-glutamyltransferase by mediating the cross-linking of proteins: under physiological conditions, the protein cross-linking activity is inhibited by GTP; inhibition is relieved by Ca(2+) in response to various stresses. When secreted, catalyzes cross-linking of proteins of the extracellular matrix, resulting in the formation of scaffolds. Plays a key role during apoptosis, both by (1) promoting the cross-linking of cytoskeletal proteins resulting in condensation of the cytoplasm, and by (2) mediating cross-linking proteins of the extracellular matrix, resulting in the irreversible formation of scaffolds that stabilize the integrity of the dying cells before their clearance by phagocytosis, thereby preventing the leakage of harmful intracellular components. In addition to protein cross-linking, can use different monoamine substrates to catalyze a vast array of protein post-translational modifications: mediates aminylation of serotonin, dopamine, noradrenaline or histamine into glutamine residues of target proteins to generate protein serotonylation, dopaminylation, noradrenalinylation or histaminylation, respectively. Mediates protein serotonylation of small GTPases during activation and aggregation of platelets, leading to constitutive activation of these GTPases. Plays a key role in chromatin organization by mediating serotonylation and dopaminylation of histone H3. Catalyzes serotonylation of 'Gln-5' of histone H3 (H3Q5ser) during serotonergic neuron differentiation, thereby facilitating transcription. Acts as a mediator of neurotransmission-independent role of nuclear dopamine in ventral tegmental area (VTA) neurons: catalyzes dopaminylation of 'Gln-5' of histone H3 (H3Q5dop), thereby regulating relapse-related transcriptional plasticity in the reward system. Also acts as a protein deamidase by mediating the side chain deamidation of specific glutamine residues of proteins to glutamate. May also act as an isopeptidase cleaving the previously formed cross-links. Also able to participate in signaling pathways independently of its acyltransferase activity: acts as a signal transducer in alpha-1 adrenergic receptor-mediated stimulation of phospholipase C-delta (PLCD) activity and is required for coupling alpha-1 adrenergic agonists to the stimulation of phosphoinositide lipid metabolism. This is Protein-glutamine gamma-glutamyltransferase 2 from Gallus gallus (Chicken).